Consider the following 312-residue polypeptide: MQCSDVQATEPDIKVSLTRVGVTNLKKLVKIKRKSKRDIVLLPTFEVYVDLPSSQKGIHMSRSPEVIEEVVENIIVEKEIYGVEELSVEIVMKLFEKHEYATRAEVMLYSDYMMEEKSPVTKKDSQEVGKIMARAYGVKDDSGMISVKKMVGAEVVGITACPCAQNLLKENAINKLIEKGFSNEDIEKILDSVTIATHNQRGIGTIMIEVPNGYTVGISKIIKIIKESMSGEVYELLKRSDEAYVVELAHKNPKFVEDCAREMIKRVVEVFDYLPEDTQVIVRQVNKESIHRHDAFAERKSKMGELRDELEI.

Belongs to the GTP cyclohydrolase IV family. Homodimer. Fe(2+) is required as a cofactor.

It carries out the reaction GTP + H2O = 7,8-dihydroneopterin 2',3'-cyclic phosphate + formate + diphosphate + H(+). The protein operates within cofactor biosynthesis; 5,6,7,8-tetrahydromethanopterin biosynthesis. Its function is as follows. Converts GTP to 7,8-dihydro-D-neopterin 2',3'-cyclic phosphate, the first intermediate in the biosynthesis of coenzyme methanopterin. This Methanococcus vannielii (strain ATCC 35089 / DSM 1224 / JCM 13029 / OCM 148 / SB) protein is GTP cyclohydrolase MptA.